The primary structure comprises 89 residues: Putative membrane protein insertion efficiency factor (89 aa).

This sequence belongs to the UPF0161 family.

The protein resides in the cell inner membrane. Its function is as follows. Could be involved in insertion of integral membrane proteins into the membrane. This Petrotoga mobilis (strain DSM 10674 / SJ95) protein is Putative membrane protein insertion efficiency factor.